We begin with the raw amino-acid sequence, 185 residues long: Elongation factor P (185 aa).

The protein belongs to the elongation factor P family.

Its subcellular location is the cytoplasm. It participates in protein biosynthesis; polypeptide chain elongation. Functionally, involved in peptide bond synthesis. Stimulates efficient translation and peptide-bond synthesis on native or reconstituted 70S ribosomes in vitro. Probably functions indirectly by altering the affinity of the ribosome for aminoacyl-tRNA, thus increasing their reactivity as acceptors for peptidyl transferase. The protein is Elongation factor P of Fervidobacterium nodosum (strain ATCC 35602 / DSM 5306 / Rt17-B1).